Consider the following 395-residue polypeptide: Na(+)/H(+) antiporter NhaA (395 aa).

12 helical membrane passes run 18–38 (AGGI…NSPL), 64–84 (LLMW…GLEV), 100–120 (IFPA…YWLV), 129–149 (GGWA…LVLL), 160–180 (FLLA…ALFF), 182–202 (HDLS…LILL), 205–225 (FKVS…VSVL), 226–246 (KSGV…PLKG), 266–286 (FLIL…GLGM), 295–315 (LGVT…FSYL), 333–353 (IFAV…LASL), and 368–388 (LGIL…LFVT).

Belongs to the NhaA Na(+)/H(+) (TC 2.A.33) antiporter family.

Its subcellular location is the cell inner membrane. It carries out the reaction Na(+)(in) + 2 H(+)(out) = Na(+)(out) + 2 H(+)(in). In terms of biological role, na(+)/H(+) antiporter that extrudes sodium in exchange for external protons. The protein is Na(+)/H(+) antiporter NhaA of Histophilus somni (strain 129Pt) (Haemophilus somnus).